We begin with the raw amino-acid sequence, 163 residues long: Phosphopantetheine adenylyltransferase (163 aa).

Threonine 10 is a substrate binding site. Residues 10 to 11 (TF) and histidine 18 contribute to the ATP site. 3 residues coordinate substrate: lysine 42, leucine 74, and arginine 88. ATP-binding positions include 89–91 (GLR), glutamate 99, and 124–130 (NSFISST).

Belongs to the bacterial CoaD family. As to quaternary structure, homohexamer. Requires Mg(2+) as cofactor.

The protein localises to the cytoplasm. It catalyses the reaction (R)-4'-phosphopantetheine + ATP + H(+) = 3'-dephospho-CoA + diphosphate. The protein operates within cofactor biosynthesis; coenzyme A biosynthesis; CoA from (R)-pantothenate: step 4/5. Reversibly transfers an adenylyl group from ATP to 4'-phosphopantetheine, yielding dephospho-CoA (dPCoA) and pyrophosphate. The protein is Phosphopantetheine adenylyltransferase of Shewanella sp. (strain W3-18-1).